The chain runs to 178 residues: ATP synthase subunit delta (178 aa).

The protein belongs to the ATPase delta chain family. F-type ATPases have 2 components, F(1) - the catalytic core - and F(0) - the membrane proton channel. F(1) has five subunits: alpha(3), beta(3), gamma(1), delta(1), epsilon(1). F(0) has three main subunits: a(1), b(2) and c(10-14). The alpha and beta chains form an alternating ring which encloses part of the gamma chain. F(1) is attached to F(0) by a central stalk formed by the gamma and epsilon chains, while a peripheral stalk is formed by the delta and b chains.

The protein localises to the cell membrane. Its function is as follows. F(1)F(0) ATP synthase produces ATP from ADP in the presence of a proton or sodium gradient. F-type ATPases consist of two structural domains, F(1) containing the extramembraneous catalytic core and F(0) containing the membrane proton channel, linked together by a central stalk and a peripheral stalk. During catalysis, ATP synthesis in the catalytic domain of F(1) is coupled via a rotary mechanism of the central stalk subunits to proton translocation. In terms of biological role, this protein is part of the stalk that links CF(0) to CF(1). It either transmits conformational changes from CF(0) to CF(1) or is implicated in proton conduction. This is ATP synthase subunit delta from Acetivibrio thermocellus (strain ATCC 27405 / DSM 1237 / JCM 9322 / NBRC 103400 / NCIMB 10682 / NRRL B-4536 / VPI 7372) (Clostridium thermocellum).